A 460-amino-acid chain; its full sequence is MSSKAWGGRFQQQPEDWVDEFNASIDFDQTLLDEDVQGSIAHATMLANQNIISQDDKDAIINGLKEIQQDFHNGKLAFKKSLEDIHLNIEHELIQRVGDAGGKLHTGRSRNDQVATDLHLYVKKEVLEIQDLIRSFQTSILKLAQSHVDTIMPGYTHLQRAQPISFAHHVMTYFWMLERDYSRFVDSMKRIDISPLGAAALSGTTHPIDRHETQQLLEFSSVYENSLDAVSDRDYIIETLHNISLTMIHLSRFAEEIIFWSTDEAKFITLSDAFSTGSSIMPQKKNPDMAELIRGKVGRATGHLMSMLVTLKGLPLAYNKDLQEDKEGLFDSVRTIKGSLRIFEGMLDTMTVNTDRLNETVHQDFSNATELADYLVAKDVPFRKAHEIVGKIVFECIQQGIYLLDVPLERYKELNSNIDQDVYDYLKPENCLSRRKSYGSTGQDAVRHQLKVAEKLLNND.

It belongs to the lyase 1 family. Argininosuccinate lyase subfamily.

It is found in the cytoplasm. The catalysed reaction is 2-(N(omega)-L-arginino)succinate = fumarate + L-arginine. The protein operates within amino-acid biosynthesis; L-arginine biosynthesis; L-arginine from L-ornithine and carbamoyl phosphate: step 3/3. This chain is Argininosuccinate lyase, found in Staphylococcus haemolyticus (strain JCSC1435).